The following is a 359-amino-acid chain: Heme A synthase (359 aa).

6 helical membrane passes run 23-43 (AVAFWLWSLAVLVFLMVVLGG), 85-105 (YAALFPDMDLAGFKFIFFFEW), 109-129 (LLGRLIGVATALPLLFFWLRG), 137-157 (LKLLGLLALGGLQGFVGWWMV), 172-192 (LAIHLILASLTFCFIVWLAAS), and 212-232 (AGLILLAILVQIGLGALVAGL). Residue His276 participates in heme binding. Helical transmembrane passes span 278 to 298 (MVAYLVLGLTLLQVFWTSGTL), 308 to 328 (IALLGLVLAQVILGILTLVLV), and 329 to 349 (VPLWAGLLHQAFAMLVLGMAV). Position 337 (His337) interacts with heme.

It belongs to the COX15/CtaA family. Type 2 subfamily. In terms of assembly, interacts with CtaB. The cofactor is heme b.

It is found in the cell membrane. It carries out the reaction Fe(II)-heme o + 2 A + H2O = Fe(II)-heme a + 2 AH2. It participates in porphyrin-containing compound metabolism; heme A biosynthesis; heme A from heme O: step 1/1. Its function is as follows. Catalyzes the conversion of heme O to heme A by two successive hydroxylations of the methyl group at C8. The first hydroxylation forms heme I, the second hydroxylation results in an unstable dihydroxymethyl group, which spontaneously dehydrates, resulting in the formyl group of heme A. The protein is Heme A synthase of Beijerinckia indica subsp. indica (strain ATCC 9039 / DSM 1715 / NCIMB 8712).